A 41-amino-acid polypeptide reads, in one-letter code: Large ribosomal subunit protein bL36 (41 aa).

The protein belongs to the bacterial ribosomal protein bL36 family.

The protein is Large ribosomal subunit protein bL36 of Nitrobacter winogradskyi (strain ATCC 25391 / DSM 10237 / CIP 104748 / NCIMB 11846 / Nb-255).